Here is a 206-residue protein sequence, read N- to C-terminus: Adenine phosphoribosyltransferase (206 aa).

It belongs to the purine/pyrimidine phosphoribosyltransferase family. In terms of assembly, homodimer.

The protein resides in the cytoplasm. It carries out the reaction AMP + diphosphate = 5-phospho-alpha-D-ribose 1-diphosphate + adenine. The protein operates within purine metabolism; AMP biosynthesis via salvage pathway; AMP from adenine: step 1/1. Its function is as follows. Catalyzes a salvage reaction resulting in the formation of AMP, that is energically less costly than de novo synthesis. The protein is Adenine phosphoribosyltransferase of Burkholderia mallei (strain NCTC 10229).